An 830-amino-acid polypeptide reads, in one-letter code: Probable glucan 1,3-beta-glucosidase D (830 aa).

Basic and acidic residues-rich tracts occupy residues Met-1–Leu-11 and Val-74–Asp-84. Disordered stretches follow at residues Met-1–Trp-91, Met-127–Lys-163, and Gly-260–Ala-297. Residues Met-1 to Lys-307 are Cytoplasmic-facing. A compositionally biased stretch (basic residues) spans Gly-147–Lys-163. The helical; Signal-anchor for type II membrane protein transmembrane segment at Thr-308–Ile-328 threads the bilayer. Over Glu-329 to Tyr-830 the chain is Extracellular. Residues Asn-341, Asn-376, Asn-381, Asn-393, Asn-397, Asn-546, and Asn-558 are each glycosylated (N-linked (GlcNAc...) asparagine). Glu-597 serves as the catalytic Proton donor. Residues Asn-610, Asn-669, and Asn-689 are each glycosylated (N-linked (GlcNAc...) asparagine). Glu-702 serves as the catalytic Nucleophile.

The protein belongs to the glycosyl hydrolase 5 (cellulase A) family.

The protein resides in the cell membrane. The catalysed reaction is Successive hydrolysis of beta-D-glucose units from the non-reducing ends of (1-&gt;3)-beta-D-glucans, releasing alpha-glucose.. In terms of biological role, glucosidase involved in the degradation of cellulosic biomass. Active on lichenan. The sequence is that of Probable glucan 1,3-beta-glucosidase D (exgD) from Aspergillus niger (strain ATCC MYA-4892 / CBS 513.88 / FGSC A1513).